Reading from the N-terminus, the 254-residue chain is Phosphoribosylaminoimidazole-succinocarboxamide synthase (254 aa).

Belongs to the SAICAR synthetase family.

The enzyme catalyses 5-amino-1-(5-phospho-D-ribosyl)imidazole-4-carboxylate + L-aspartate + ATP = (2S)-2-[5-amino-1-(5-phospho-beta-D-ribosyl)imidazole-4-carboxamido]succinate + ADP + phosphate + 2 H(+). It participates in purine metabolism; IMP biosynthesis via de novo pathway; 5-amino-1-(5-phospho-D-ribosyl)imidazole-4-carboxamide from 5-amino-1-(5-phospho-D-ribosyl)imidazole-4-carboxylate: step 1/2. The protein is Phosphoribosylaminoimidazole-succinocarboxamide synthase of Gluconacetobacter diazotrophicus (strain ATCC 49037 / DSM 5601 / CCUG 37298 / CIP 103539 / LMG 7603 / PAl5).